A 229-amino-acid polypeptide reads, in one-letter code: ATP-dependent dethiobiotin synthetase BioD (229 aa).

12–17 (GAGKTI) contributes to the ATP binding site. Position 16 (Thr-16) interacts with Mg(2+). The active site involves Lys-38. ATP is bound by residues Asp-46, 105–108 (EGVG), and 165–166 (SE). Residues Asp-46 and Glu-105 each coordinate Mg(2+).

This sequence belongs to the dethiobiotin synthetase family. As to quaternary structure, homodimer. Mg(2+) serves as cofactor.

The protein resides in the cytoplasm. The enzyme catalyses (7R,8S)-7,8-diammoniononanoate + CO2 + ATP = (4R,5S)-dethiobiotin + ADP + phosphate + 3 H(+). The catalysed reaction is (7R,8S)-8-amino-7-(carboxyamino)nonanoate + ATP = (4R,5S)-dethiobiotin + ADP + phosphate + H(+). The protein operates within cofactor biosynthesis; biotin biosynthesis; biotin from 7,8-diaminononanoate: step 1/2. Its function is as follows. Catalyzes a mechanistically unusual reaction, the ATP-dependent insertion of CO2 between the N7 and N8 nitrogen atoms of 7,8-diaminopelargonic acid (DAPA, also called 7,8-diammoniononanoate) to form a ureido ring. This cyanobacterium does not encode bioA (which catalyzes the formation of the precursor for this reaction in the cannonical pathway), instead it encodes bioU, which replaces bioA and also performs the first half of the cannonical BioD reaction. Thus in this organism BioD has a different substrate. The polypeptide is ATP-dependent dethiobiotin synthetase BioD (Gloeobacter violaceus (strain ATCC 29082 / PCC 7421)).